An 874-amino-acid chain; its full sequence is Alanine--tRNA ligase (874 aa).

Zn(2+) contacts are provided by His-564, His-568, Cys-665, and His-669.

Belongs to the class-II aminoacyl-tRNA synthetase family. It depends on Zn(2+) as a cofactor.

It localises to the cytoplasm. It catalyses the reaction tRNA(Ala) + L-alanine + ATP = L-alanyl-tRNA(Ala) + AMP + diphosphate. In terms of biological role, catalyzes the attachment of alanine to tRNA(Ala) in a two-step reaction: alanine is first activated by ATP to form Ala-AMP and then transferred to the acceptor end of tRNA(Ala). Also edits incorrectly charged Ser-tRNA(Ala) and Gly-tRNA(Ala) via its editing domain. The sequence is that of Alanine--tRNA ligase from Delftia acidovorans (strain DSM 14801 / SPH-1).